Reading from the N-terminus, the 988-residue chain is Band 4.1-like protein 2 (988 aa).

Residues 1–190 (MTTEVGSASE…GAAKRETKEV (190 aa)) form a disordered region. An N-acetylthreonine modification is found at Thr-2. Phosphoserine is present on Ser-7. Residues 22 to 31 (ASKEKAKEVE) show a composition bias toward basic and acidic residues. Phosphoserine occurs at positions 38, 86, and 116. Composition is skewed to basic and acidic residues over residues 110 to 148 (ILGK…EAKP) and 160 to 190 (EEVR…TKEV). 8 positions are modified to phosphoserine: Ser-201, Ser-379, Ser-395, Ser-492, Ser-543, Ser-555, Ser-561, and Ser-582. The region spanning 211–492 (VLAKVTLLDG…EHHTFYRLVS (282 aa)) is the FERM domain. The segment at 495–651 (QPPKTKFLTL…TPEPRPSEWE (157 aa)) is hydrophilic. The interval 514–594 (TQAQTREAST…KATPLPAEGK (81 aa)) is disordered. Low complexity predominate over residues 555-567 (SPPGEGSVPGPGV). Tyr-606 bears the Phosphotyrosine mark. Phosphoserine is present on residues Ser-610 and Ser-630. Disordered regions lie at residues 639 to 788 (MAST…QAGA) and 804 to 839 (QKLP…VPHL). The segment at 652-837 (KRRVTPLPFQ…DPHRVNGEVP (186 aa)) is spectrin--actin-binding. The segment covering 673–686 (VEEKKRAEVGKDES) has biased composition (basic and acidic residues). Residue Ser-698 is modified to Phosphoserine. Positions 704–717 (GETRKVEPVAHKDS) are enriched in basic and acidic residues. The span at 718 to 729 (TSLSSESSSSSS) shows a compositional bias: low complexity. The span at 739–751 (QPHHRVTEGTIRE) shows a compositional bias: basic and acidic residues. Thr-745 bears the Phosphothreonine mark. Residues 752 to 764 (EQEECDEELEEEP) show a composition bias toward acidic residues. The segment covering 828 to 839 (DPHRVNGEVPHL) has biased composition (basic and acidic residues). The segment at 838–988 (HLDLDGLPEI…ETELAEEGEE (151 aa)) is C-terminal (CTD).

In terms of assembly, interacts with FCGR1A. Interacts with TRPC4. Interacts (via CTD domain) with FKBP2. Interacts with NUMA1; this interaction is negatively regulated by CDK1 during metaphase and promotes anaphase-specific localization of NUMA1 in symmetrically dividing cells. Widely expressed.

Its subcellular location is the cytoplasm. It localises to the cytoskeleton. The protein localises to the cell cortex. The protein resides in the cell membrane. In terms of biological role, required for dynein-dynactin complex and NUMA1 recruitment at the mitotic cell cortex during anaphase. The chain is Band 4.1-like protein 2 from Mus musculus (Mouse).